A 257-amino-acid polypeptide reads, in one-letter code: Phosphatidylglycerol--prolipoprotein diacylglyceryl transferase (257 aa).

Helical transmembrane passes span 13 to 33 (IGPI…AIGG), 49 to 69 (FLLN…RLMF), 88 to 108 (IYEG…AGLY), 123 to 143 (FAVL…IFNQ), 152 to 172 (FAFG…ILLI), 185 to 202 (GYQF…RGLI), and 223 to 243 (IGFF…AYWM). R136 contributes to the a 1,2-diacyl-sn-glycero-3-phospho-(1'-sn-glycerol) binding site.

It belongs to the Lgt family.

It is found in the cell membrane. It catalyses the reaction L-cysteinyl-[prolipoprotein] + a 1,2-diacyl-sn-glycero-3-phospho-(1'-sn-glycerol) = an S-1,2-diacyl-sn-glyceryl-L-cysteinyl-[prolipoprotein] + sn-glycerol 1-phosphate + H(+). Its pathway is protein modification; lipoprotein biosynthesis (diacylglyceryl transfer). In terms of biological role, catalyzes the transfer of the diacylglyceryl group from phosphatidylglycerol to the sulfhydryl group of the N-terminal cysteine of a prolipoprotein, the first step in the formation of mature lipoproteins. In Thermoanaerobacter pseudethanolicus (strain ATCC 33223 / 39E) (Clostridium thermohydrosulfuricum), this protein is Phosphatidylglycerol--prolipoprotein diacylglyceryl transferase.